The primary structure comprises 334 residues: Methionyl-tRNA formyltransferase (334 aa).

Position 111-114 (111-114 (SLLP)) interacts with (6S)-5,6,7,8-tetrahydrofolate.

Belongs to the Fmt family.

The catalysed reaction is L-methionyl-tRNA(fMet) + (6R)-10-formyltetrahydrofolate = N-formyl-L-methionyl-tRNA(fMet) + (6S)-5,6,7,8-tetrahydrofolate + H(+). Its function is as follows. Attaches a formyl group to the free amino group of methionyl-tRNA(fMet). The formyl group appears to play a dual role in the initiator identity of N-formylmethionyl-tRNA by promoting its recognition by IF2 and preventing the misappropriation of this tRNA by the elongation apparatus. The protein is Methionyl-tRNA formyltransferase of Cyanothece sp. (strain PCC 7425 / ATCC 29141).